Reading from the N-terminus, the 423-residue chain is UDP-N-acetylglucosamine 1-carboxyvinyltransferase (423 aa).

22-23 provides a ligand contact to phosphoenolpyruvate; that stretch reads KN. R93 contributes to the UDP-N-acetyl-alpha-D-glucosamine binding site. C117 serves as the catalytic Proton donor. C117 carries the 2-(S-cysteinyl)pyruvic acid O-phosphothioketal modification. Residues 122 to 126, D307, and V329 each bind UDP-N-acetyl-alpha-D-glucosamine; that span reads RPIDL.

The protein belongs to the EPSP synthase family. MurA subfamily.

It is found in the cytoplasm. The catalysed reaction is phosphoenolpyruvate + UDP-N-acetyl-alpha-D-glucosamine = UDP-N-acetyl-3-O-(1-carboxyvinyl)-alpha-D-glucosamine + phosphate. It functions in the pathway cell wall biogenesis; peptidoglycan biosynthesis. In terms of biological role, cell wall formation. Adds enolpyruvyl to UDP-N-acetylglucosamine. The polypeptide is UDP-N-acetylglucosamine 1-carboxyvinyltransferase (Chlorobium chlorochromatii (strain CaD3)).